The following is a 444-amino-acid chain: N-succinylarginine dihydrolase (444 aa).

Residues 19-28, N110, and 137-138 contribute to the substrate site; these read SGLSVGNIAS and HR. E174 is a catalytic residue. R214 is a binding site for substrate. The active site involves H250. Substrate-binding residues include D252 and N362. C368 functions as the Nucleophile in the catalytic mechanism.

The protein belongs to the succinylarginine dihydrolase family. In terms of assembly, homodimer.

The catalysed reaction is N(2)-succinyl-L-arginine + 2 H2O + 2 H(+) = N(2)-succinyl-L-ornithine + 2 NH4(+) + CO2. Its pathway is amino-acid degradation; L-arginine degradation via AST pathway; L-glutamate and succinate from L-arginine: step 2/5. Catalyzes the hydrolysis of N(2)-succinylarginine into N(2)-succinylornithine, ammonia and CO(2). The chain is N-succinylarginine dihydrolase from Aliivibrio salmonicida (strain LFI1238) (Vibrio salmonicida (strain LFI1238)).